The following is a 2528-amino-acid chain: Squalestatin tetraketide synthase clz2 (2528 aa).

One can recognise a Ketosynthase family 3 (KS3) domain in the interval 14–409 (TVPIAIVGMS…GANAHVILES (396 aa)). Active-site for beta-ketoacyl synthase activity residues include cysteine 187, histidine 291, and histidine 331. Residues 420–457 (VNGHHQKNGTTNGHKGANGTTNELNGTNGTANGHDITT) are disordered. Residues 436-452 (ANGTTNELNGTNGTANG) are compositionally biased toward low complexity. The malonyl-CoA:ACP transacylase (MAT) domain stretch occupies residues 538–856 (GAQWFAMGRE…PYLSCLLRGQ (319 aa)). The interval 925 to 1063 (HDLLGSLIPG…GRIAIELDTS (139 aa)) is N-terminal hotdog fold. Residues 925-1239 (HDLLGSLIPG…NQSVGQIALQ (315 aa)) enclose the PKS/mFAS DH domain. The segment at 925-1239 (HDLLGSLIPG…NQSVGQIALQ (315 aa)) is dehydratase (DH) domain. The active-site Proton acceptor; for dehydratase activity is histidine 957. The interval 1083–1239 (TRSVDPSNLY…NQSVGQIALQ (157 aa)) is C-terminal hotdog fold. Catalysis depends on aspartate 1148, which acts as the Proton donor; for dehydratase activity. A methyltransferase (CMet) domain region spans residues 1390-1590 (LYRYYTDAIK…GLDVELRDCD (201 aa)). The interval 1817–2130 (GLIDTLQFSK…AGKHMGKIVI (314 aa)) is enoyl reductase (ER) (ER) domain. Residues 2153–2331 (ASYLIVGGLG…AVSIDLGMVQ (179 aa)) form a ketoreductase (KR) domain region. Residues 2408 to 2430 (RARDAKEQSNSQGGGTDSKISPG) form a disordered region. A Carrier domain is found at 2441 to 2518 (EAIDVVGRAI…ALATTVATKS (78 aa)). Serine 2478 carries the O-(pantetheine 4'-phosphoryl)serine modification.

Its pathway is secondary metabolite biosynthesis. Functionally, highly reducing polyketide synthase (HR-PKS); part of the gene cluster that mediates the biosynthesis of squalestatin S1 (SQS1, also known as zaragozic acid A), a heavily oxidized fungal polyketide that offers potent cholesterol lowering activity by targeting squalene synthase (SS). SQS1 is composed of a 2,8-dioxobicyclic[3.2.1]octane-3,4,5-tricarboxyclic acid core that is connected to two lipophilic polyketide arms. These initial steps feature the priming of an unusual benzoic acid starter unit onto the highly reducing polyketide synthase clz14, followed by oxaloacetate extension and product release to generate a tricarboxylic acid containing product. The phenylalanine ammonia lyase (PAL) clz10 and the acyl-CoA ligase clz12 are involved in transforming phenylalanine into benzoyl-CoA. The citrate synthase-like protein clz17 is involved in connecting the C-alpha-carbons of the hexaketide chain and oxaloacetate to afford the tricarboxylic acid unit. The potential hydrolytic enzymes, clz11 and clz13, are in close proximity to pks2 and may participate in product release. On the other side, the tetraketide arm is synthesized by a the squalestatin tetraketide synthase clz2 and enzymatically esterified to the core in the last biosynthetic step, by the acetyltransferase clz6. The biosynthesis of the tetraketide must involve 3 rounds of chain extension. After the first and second rounds methyl-transfer occurs, and in all rounds of extension the ketoreductase and dehydratase are active. The enoyl reductase and C-MeT of clz2 are not active in the final round of extension. The acetyltransferase clz6 appears to have a broad substrate selectivity for its acyl CoA substrate, allowing the in vitro synthesis of novel squalestatins. The biosynthesis of SQS1 requires several oxidative steps likely performed by oxidoreductases clz3, clz15 and clz16. Finally, in support of the identification of the cluster as being responsible for SQS1 production, the cluster contains a gene encoding a putative squalene synthase (SS) clz20, suggesting a likely mechanism for self-resistance. This Cochliobolus lunatus (Filamentous fungus) protein is Squalestatin tetraketide synthase clz2.